A 184-amino-acid polypeptide reads, in one-letter code: CDP-archaeol synthase (184 aa).

Helical transmembrane passes span 4–24, 54–74, 86–106, 122–142, and 145–165; these read IIMV…NPGA, FIGG…IIYI, IISA…GDIT, GSLL…FIFA, and FFLE…LTPP.

It belongs to the CDP-archaeol synthase family. Mg(2+) is required as a cofactor.

The protein localises to the cell membrane. The enzyme catalyses 2,3-bis-O-(geranylgeranyl)-sn-glycerol 1-phosphate + CTP + H(+) = CDP-2,3-bis-O-(geranylgeranyl)-sn-glycerol + diphosphate. It participates in membrane lipid metabolism; glycerophospholipid metabolism. In terms of biological role, catalyzes the formation of CDP-2,3-bis-(O-geranylgeranyl)-sn-glycerol (CDP-archaeol) from 2,3-bis-(O-geranylgeranyl)-sn-glycerol 1-phosphate (DGGGP) and CTP. This reaction is the third ether-bond-formation step in the biosynthesis of archaeal membrane lipids. The sequence is that of CDP-archaeol synthase from Picrophilus torridus (strain ATCC 700027 / DSM 9790 / JCM 10055 / NBRC 100828 / KAW 2/3).